The chain runs to 27 residues: Morintide mO5 (27 aa).

The region spanning asparagine 1–asparagine 27 is the Chitin-binding type-1 domain. The cysteines at positions 4 and 18 are disulfide-linked.

In terms of tissue distribution, seeds (at protein level).

Chitin-binding protein which functions in defense against chitin-containing fungal pathogens. This chain is Morintide mO5, found in Moringa oleifera (Horseradish tree).